The following is a 247-amino-acid chain: Adenosylcobinamide-GDP ribazoletransferase (247 aa).

6 helical membrane passes run 34 to 54 (IVMF…IFIL), 59 to 79 (CGIP…TGGF), 113 to 133 (GGLA…ELAL), 138 to 158 (MLAA…LLMY), 171 to 193 (VFIG…IIAT), and 197 to 219 (PGMQ…GQLL).

Belongs to the CobS family. Requires Mg(2+) as cofactor.

It is found in the cell inner membrane. It carries out the reaction alpha-ribazole + adenosylcob(III)inamide-GDP = adenosylcob(III)alamin + GMP + H(+). The catalysed reaction is alpha-ribazole 5'-phosphate + adenosylcob(III)inamide-GDP = adenosylcob(III)alamin 5'-phosphate + GMP + H(+). Its pathway is cofactor biosynthesis; adenosylcobalamin biosynthesis; adenosylcobalamin from cob(II)yrinate a,c-diamide: step 7/7. In terms of biological role, joins adenosylcobinamide-GDP and alpha-ribazole to generate adenosylcobalamin (Ado-cobalamin). Also synthesizes adenosylcobalamin 5'-phosphate from adenosylcobinamide-GDP and alpha-ribazole 5'-phosphate. This Salmonella newport (strain SL254) protein is Adenosylcobinamide-GDP ribazoletransferase.